The primary structure comprises 296 residues: MARCERLRGAALRDVLGRAQGVLFDCDGVLWNGERAVPGAPELLERLARAGKAALFVSNNSRRARPELALRFARLGFGGLRAEQLFSSALCAARLLRQRLPGPPDAPGAVFVLGGEGLRAELRAAGLRLAGDPSAGDGAAPRVRAVLVGYDEHFSFAKLREACAHLRDPECLLVATDRDPWHPLSDGSRTPGTGSLAAAVETASGRQALVVGKPSPYMFECITENFSIDPARTLMVGDRLETDILFGHRCGMTTVLTLTGVSRLEEAQAYLAAGQHDLVPHYYVESIADLTEGLED.

The active-site Nucleophile is D25. Mg(2+)-binding residues include D25 and D27. D27 (proton donor) is an active-site residue. Residues 58 to 60 (SNN), H182, and K213 contribute to the substrate site. Mg(2+) is bound at residue D238.

The protein belongs to the HAD-like hydrolase superfamily. Homodimer. Requires Mg(2+) as cofactor. In terms of tissue distribution, ubiquitously expressed (at protein level). Highly expressed in all the regions of central nerve system except the spinal cord. Also expressed at high level in liver and testis. In fetus, it is weakly expressed in all organs except brain.

It is found in the cytoplasm. It localises to the cytosol. The protein localises to the cytoskeleton. Its subcellular location is the cell projection. The protein resides in the ruffle membrane. It is found in the lamellipodium membrane. It localises to the cell membrane. The catalysed reaction is pyridoxal 5'-phosphate + H2O = pyridoxal + phosphate. It catalyses the reaction pyridoxine 5'-phosphate + H2O = pyridoxine + phosphate. It carries out the reaction pyridoxamine + phosphate = pyridoxamine 5'-phosphate + H2O. The enzyme catalyses O-phospho-L-seryl-[protein] + H2O = L-seryl-[protein] + phosphate. With respect to regulation, inhibited by NaF, Zn(2+), Ca(2+), Mn(2+) and EDTA. Functions as a pyridoxal phosphate (PLP) phosphatase, which also catalyzes the dephosphorylation of pyridoxine 5'-phosphate (PNP) and pyridoxamine 5'-phosphate (PMP), with order of substrate preference PLP &gt; PNP &gt; PMP and therefore plays a role in vitamin B6 metabolism. Also functions as a protein serine phosphatase that specifically dephosphorylates 'Ser-3' in proteins of the actin-depolymerizing factor (ADF)/cofilin family like CFL1 and DSTN. Thereby, regulates cofilin-dependent actin cytoskeleton reorganization, being required for normal progress through mitosis and normal cytokinesis. Does not dephosphorylate phosphothreonines in LIMK1. Does not dephosphorylate peptides containing phosphotyrosine. This chain is Chronophin, found in Homo sapiens (Human).